We begin with the raw amino-acid sequence, 487 residues long: Catalase (487 aa).

The tract at residues 1-20 (MSQRVLTTESGAPVADNQNS) is disordered. Active-site residues include H54 and N127. Y337 provides a ligand contact to heme.

It belongs to the catalase family. The cofactor is heme.

The catalysed reaction is 2 H2O2 = O2 + 2 H2O. In terms of biological role, decomposes hydrogen peroxide into water and oxygen; serves to protect cells from the toxic effects of hydrogen peroxide. The chain is Catalase (katA) from Streptomyces coelicolor (strain ATCC BAA-471 / A3(2) / M145).